The sequence spans 180 residues: Large ribosomal subunit protein uL5 (180 aa).

The protein belongs to the universal ribosomal protein uL5 family. In terms of assembly, part of the 50S ribosomal subunit; part of the 5S rRNA/L5/L18/L25 subcomplex. Contacts the 5S rRNA and the P site tRNA. Forms a bridge to the 30S subunit in the 70S ribosome.

Its function is as follows. This is one of the proteins that bind and probably mediate the attachment of the 5S RNA into the large ribosomal subunit, where it forms part of the central protuberance. In the 70S ribosome it contacts protein S13 of the 30S subunit (bridge B1b), connecting the 2 subunits; this bridge is implicated in subunit movement. Contacts the P site tRNA; the 5S rRNA and some of its associated proteins might help stabilize positioning of ribosome-bound tRNAs. The polypeptide is Large ribosomal subunit protein uL5 (Ligilactobacillus salivarius (strain UCC118) (Lactobacillus salivarius)).